We begin with the raw amino-acid sequence, 653 residues long: Epithelial sodium channel subunit gamma (653 aa).

Over Met-1 to Leu-55 the chain is Cytoplasmic. A helical membrane pass occupies residues Trp-56–Phe-76. Over Ser-77–Gln-538 the chain is Extracellular. Cystine bridges form between Cys-100-Cys-287, Cys-211-Cys-218, Cys-264-Cys-271, Cys-376-Cys-461, Cys-398-Cys-457, Cys-402-Cys-453, Cys-411-Cys-438, and Cys-413-Cys-427. The tract at residues Arg-137–Ser-225 is gating release of inhibition by proteolysis (GRIP); protease-sensitive region that is responsible for the proteolytic activation of the channel. Asn-213 carries an N-linked (GlcNAc...) asparagine glycan. N-linked (GlcNAc...) asparagine glycosylation occurs at Asn-275. A glycan (N-linked (GlcNAc...) asparagine) is linked at Asn-501. A helical membrane pass occupies residues Leu-539–Ile-559. Residues Asp-560–Pro-653 lie on the Cytoplasmic side of the membrane. The interval Ala-582–Asn-632 is disordered. Residues Pro-627–Tyr-631 carry the PY motif; recruits WW domain-containing proteins and is thereby required for ubiquitination and inhibition of the channel by NEDD4 and NEDD4L motif.

Belongs to the amiloride-sensitive sodium channel (TC 1.A.6) family. SCNN1G subfamily. In terms of assembly, component of the heterotrimeric epithelial sodium channel (ENaC) composed of an alpha/SCNN1A, a beta/SCNN1B and a gamma/SCNN1G subunit. Interacts with WWP1 (via WW domains). Interacts with WWP2 (via WW domains); inhibits the channel. Interacts with the full-length immature form of PCSK9 (pro-PCSK9); inhibits ENaC by promoting its proteasomal degradation. Interacts with BPIFA1; the interaction is indirect via SCNN1B and inhibits the proteolytic maturation of SCNN1A and SCNN1G and the activation of ENaC. Phosphorylated on serine and threonine residues. Aldosterone and insulin increase the basal level of phosphorylation. Post-translationally, ubiquitinated. Can be ubiquitinated at multiple sites and undergo monoubiquitination and polyubiquitination. Ubiquitination by NEDD4 or NEDD4L inhibits the ENaC channel through endocytosis, intracellular retention and degradation of its individual subunits. In terms of processing, ENaC is activated through the proteolytic maturation of its subunits. Furin cleaves the SCNN1G subunit first, followed by cleavage by prostasin (PRSS8), which results in a stepwise increase in the open probability of the channel due to the release of an inhibitory tract. BPIFA1, which is recruited by the SCNN1B subunit, prevents the proteolytic activation of ENaC. N-glycosylated. N-linked glycans are processed to complex type during ENaC complex assembly and transport to the plasma membrane.

It is found in the apical cell membrane. The enzyme catalyses Na(+)(in) = Na(+)(out). Originally identified and characterized by its inhibition by the diuretic drug amiloride. Its function is as follows. This is one of the three pore-forming subunits of the heterotrimeric epithelial sodium channel (ENaC), a critical regulator of sodium balance and fluid homeostasis. ENaC operates in epithelial tissues, where it mediates the electrodiffusion of sodium ions from extracellular fluid through the apical membrane of cells, with water following osmotically. It plays a key role in maintaining sodium homeostasis through electrogenic sodium reabsorption in the kidneys. Additionally, ENaC is essential for airway surface liquid homeostasis, which is crucial for proper mucus clearance. The protein is Epithelial sodium channel subunit gamma of Oryctolagus cuniculus (Rabbit).